The sequence spans 163 residues: Protein LOL5 (163 aa).

Composition is skewed to polar residues over residues 1–25 (MSQL…QPQS) and 33–44 (LQPQHPPSSTAH). Residues 1-51 (MSQLPLASQATTTDLVSTTAMQPQSEGIVDESLQPQHPPSSTAHDSPCLQD) are disordered. 2 putative zinc finger regions span residues 70 to 100 (QMVC…MNYV) and 108 to 138 (KVHC…VTEI).

It is found in the nucleus. Involved in plant growth and disease resistance. The protein is Protein LOL5 (LOL5) of Oryza sativa subsp. japonica (Rice).